We begin with the raw amino-acid sequence, 203 residues long: MHKAPESVLNALVPMVVEQTAKGERSYDIYSRLLKERVIFLVGQVEEHMANLIVAQLLFLESESPDKDIYLYINSPGGSVTAGMAIYDTMQFIKPNVSTVCIGQAASMGAFLLAGGAEGKRHCLPNSRVMIHQPLGGFQGQASDIAIHAQEILGIKNKLNTMLAEHTGQPLEVIERDTDRDNFMSATEAAEYGLVDSVIAKRS.

S107 (nucleophile) is an active-site residue. The active site involves H132.

The protein belongs to the peptidase S14 family. Fourteen ClpP subunits assemble into 2 heptameric rings which stack back to back to give a disk-like structure with a central cavity, resembling the structure of eukaryotic proteasomes.

It localises to the cytoplasm. It carries out the reaction Hydrolysis of proteins to small peptides in the presence of ATP and magnesium. alpha-casein is the usual test substrate. In the absence of ATP, only oligopeptides shorter than five residues are hydrolyzed (such as succinyl-Leu-Tyr-|-NHMec, and Leu-Tyr-Leu-|-Tyr-Trp, in which cleavage of the -Tyr-|-Leu- and -Tyr-|-Trp bonds also occurs).. In terms of biological role, cleaves peptides in various proteins in a process that requires ATP hydrolysis. Has a chymotrypsin-like activity. Plays a major role in the degradation of misfolded proteins. This is ATP-dependent Clp protease proteolytic subunit from Shewanella halifaxensis (strain HAW-EB4).